We begin with the raw amino-acid sequence, 178 residues long: N-alpha-acetyltransferase 80 (178 aa).

An N-acetyltransferase domain is found at 26-178 (VPIHNYPELM…AKKKYMKKVL (153 aa)). Substrate contacts are provided by residues arginine 48, 53–56 (RMRS), asparagine 88, and serine 98. Residues 99-101 (VVV) and 107-112 (GQGFGK) contribute to the acetyl-CoA site. Serine 134 is a binding site for substrate. Glutamine 138 is an acetyl-CoA binding site.

It belongs to the acetyltransferase family.

The catalysed reaction is N-terminal L-aspartyl-L-aspartyl-L-aspartyl-[protein] + acetyl-CoA = N-terminal N-acetyl-L-aspartyl-L-aspartyl-L-aspartyl-[protein] + CoA + H(+). It catalyses the reaction N-terminal L-glutamyl-L-glutamyl-L-glutamyl-[protein] + acetyl-CoA = N-terminal N-acetyl-L-glutamyl-L-glutamyl-L-glutamyl-[protein] + CoA + H(+). Its function is as follows. N-alpha-acetyltransferase that acetylates the amino terminal acidic residue of proteins devoid of initiator methionine. Preferentially acts on proteins starting with Asp-Asp-Asp and Glu-Glu-Glu sequences. In vitro, shows high activity towards N-terminal sequences starting with Met-Asp-Glu-Leu, Met-Glu-Glu-Glu and Met-Asp-Asp-Asp. The polypeptide is N-alpha-acetyltransferase 80 (Drosophila melanogaster (Fruit fly)).